We begin with the raw amino-acid sequence, 217 residues long: Octanoyltransferase (217 aa).

The region spanning 34–216 (SETRDELWLL…AASRASRHDR (183 aa)) is the BPL/LPL catalytic domain. Substrate contacts are provided by residues 73–80 (RGGQVTWH), 140–142 (ALG), and 153–155 (GLS). C171 serves as the catalytic Acyl-thioester intermediate.

This sequence belongs to the LipB family.

It is found in the cytoplasm. It catalyses the reaction octanoyl-[ACP] + L-lysyl-[protein] = N(6)-octanoyl-L-lysyl-[protein] + holo-[ACP] + H(+). It participates in protein modification; protein lipoylation via endogenous pathway; protein N(6)-(lipoyl)lysine from octanoyl-[acyl-carrier-protein]: step 1/2. In terms of biological role, catalyzes the transfer of endogenously produced octanoic acid from octanoyl-acyl-carrier-protein onto the lipoyl domains of lipoate-dependent enzymes. Lipoyl-ACP can also act as a substrate although octanoyl-ACP is likely to be the physiological substrate. The protein is Octanoyltransferase of Halorhodospira halophila (strain DSM 244 / SL1) (Ectothiorhodospira halophila (strain DSM 244 / SL1)).